An 87-amino-acid chain; its full sequence is Small ribosomal subunit protein uS17 (87 aa).

Belongs to the universal ribosomal protein uS17 family. Part of the 30S ribosomal subunit.

Its function is as follows. One of the primary rRNA binding proteins, it binds specifically to the 5'-end of 16S ribosomal RNA. The polypeptide is Small ribosomal subunit protein uS17 (Bacillus cereus (strain ATCC 14579 / DSM 31 / CCUG 7414 / JCM 2152 / NBRC 15305 / NCIMB 9373 / NCTC 2599 / NRRL B-3711)).